The chain runs to 413 residues: NPL4-like protein 1 (413 aa).

Ser104 is subject to Phosphoserine. In terms of domain architecture, MPN spans 131-272; sequence SVSFDRDCAN…ADVHFEPFQM (142 aa).

This sequence belongs to the NPL4 family.

It participates in protein degradation; proteasomal ubiquitin-dependent pathway. May be part of a complex that binds ubiquitinated proteins and that is necessary for the export of misfolded proteins from the ER to the cytoplasm, where they are degraded by the proteasome. In Arabidopsis thaliana (Mouse-ear cress), this protein is NPL4-like protein 1.